The primary structure comprises 297 residues: UBX domain-containing protein 1 (297 aa).

Ala-2 bears the N-acetylalanine mark. Positions 2 to 42 (AELTALESLIEMGFPKGRAEKALALTGNQGIEAAMDWLMEH) constitute a UBA domain. Residues 40-210 (MEHEDDPDVD…PSREPPTKRE (171 aa)) are disordered. The segment at 43–297 (EDDPDVDEPL…VLIVAKKCPG (255 aa)) is interaction with BRCA1. Basic and acidic residues-rich tracts occupy residues 86–122 (LTEE…ERER) and 137–177 (RLQE…ERAK). Positions 86–176 (LTEEERQEQT…KIERDKAERA (91 aa)) form a coiled coil. Pro residues predominate over residues 187-199 (PSPPATEPGPVPS). Phosphoserine is present on Ser-199. Residue Ser-200 is modified to Phosphoserine; by MAPK12. Phosphothreonine occurs at positions 207 and 229. The region spanning 209–291 (REYDQCRIQV…GLVPSAVLIV (83 aa)) is the UBX domain. Ser-270 is modified (phosphoserine).

As to quaternary structure, component of a complex required to couple retrotranslocation, ubiquitination and deglycosylation composed of NGLY1, SAKS1, AMFR, VCP and RAD23B. Interacts with HOMER2. Interacts directly with VCP. Interacts with BRCA1 and BARD1; interaction takes place when BRCA1 is not autoubiquitinated bur is strongly enhanced in the presence of autoubiquitinated BRCA1.

The protein resides in the cytoplasm. Ubiquitin-binding protein that interacts with the BRCA1-BARD1 heterodimer, and regulates its activity. Specifically binds 'Lys-6'-linked polyubiquitin chains. Interaction with autoubiquitinated BRCA1, leads to inhibit the E3 ubiquitin-protein ligase activity of the BRCA1-BARD1 heterodimer. Component of a complex required to couple deglycosylation and proteasome-mediated degradation of misfolded proteins in the endoplasmic reticulum that are retrotranslocated in the cytosol. This is UBX domain-containing protein 1 (UBXN1) from Bos taurus (Bovine).